The sequence spans 324 residues: Probable acrylyl-CoA reductase AcuI (324 aa).

Residues Y41, S156–V159, S178–R180, R198, L242, I256, S267, and N313 each bind NADP(+).

This sequence belongs to the zinc-containing alcohol dehydrogenase family. Acrylyl-CoA reductase subfamily. As to quaternary structure, homodimer.

Its subcellular location is the cytoplasm. It catalyses the reaction propanoyl-CoA + NADP(+) = acryloyl-CoA + NADPH + H(+). In terms of biological role, probably catalyzes the NADPH-dependent reduction of acrylyl-CoA to propanoyl-CoA. The protein is Probable acrylyl-CoA reductase AcuI (acuI) of Escherichia coli (strain K12).